The following is an 895-amino-acid chain: DNA mismatch repair protein MutS (895 aa).

607-614 contacts ATP; the sequence is GPNMSGKS.

This sequence belongs to the DNA mismatch repair MutS family.

Functionally, this protein is involved in the repair of mismatches in DNA. It is possible that it carries out the mismatch recognition step. This protein has a weak ATPase activity. This is DNA mismatch repair protein MutS from Bacillus cytotoxicus (strain DSM 22905 / CIP 110041 / 391-98 / NVH 391-98).